The following is a 37-amino-acid chain: Large ribosomal subunit protein bL36c (37 aa).

It belongs to the bacterial ribosomal protein bL36 family.

It localises to the plastid. It is found in the chloroplast. The polypeptide is Large ribosomal subunit protein bL36c (Physcomitrium patens (Spreading-leaved earth moss)).